A 300-amino-acid chain; its full sequence is Ornithine carbamoyltransferase (300 aa).

Residues 50–53 (STRT), Q77, R101, and 128–131 (HPCQ) contribute to the carbamoyl phosphate site. L-ornithine is bound by residues N159, D219, and 223–224 (SM). Residues 257 to 258 (CL) and R285 each bind carbamoyl phosphate.

The protein belongs to the aspartate/ornithine carbamoyltransferase superfamily. OTCase family.

Its subcellular location is the cytoplasm. It catalyses the reaction carbamoyl phosphate + L-ornithine = L-citrulline + phosphate + H(+). It participates in amino-acid degradation; L-arginine degradation via ADI pathway; carbamoyl phosphate from L-arginine: step 2/2. Reversibly catalyzes the transfer of the carbamoyl group from carbamoyl phosphate (CP) to the N(epsilon) atom of ornithine (ORN) to produce L-citrulline. The sequence is that of Ornithine carbamoyltransferase from Haloquadratum walsbyi (strain DSM 16790 / HBSQ001).